Consider the following 168-residue polypeptide: Protein-export protein SecB (168 aa).

Over residues 1–10 (MSDQGTNNGE) the composition is skewed to polar residues. The interval 1–22 (MSDQGTNNGESGNGGAQNGEAP) is disordered.

Belongs to the SecB family. As to quaternary structure, homotetramer, a dimer of dimers. One homotetramer interacts with 1 SecA dimer.

Its subcellular location is the cytoplasm. One of the proteins required for the normal export of preproteins out of the cell cytoplasm. It is a molecular chaperone that binds to a subset of precursor proteins, maintaining them in a translocation-competent state. It also specifically binds to its receptor SecA. The protein is Protein-export protein SecB of Parvibaculum lavamentivorans (strain DS-1 / DSM 13023 / NCIMB 13966).